The chain runs to 354 residues: Non-structural protein NS2 (354 aa).

Disordered regions lie at residues 163–196 and 229–269; these read NERE…DNEA and DERD…THIT. Basic and acidic residues-rich tracts occupy residues 178–196 and 237–249; these read SREE…DNEA and DERG…KTLS. A compositionally biased stretch (acidic residues) spans 250 to 260; it reads DDDDQGEDASD.

Its function is as follows. Single-stranded RNA-binding protein. The protein is Non-structural protein NS2 (Segment-8) of Bluetongue virus 17 (isolate USA) (BTV 17).